Here is a 184-residue protein sequence, read N- to C-terminus: DOMON domain-containing protein CBG21755 (184 aa).

Residues Met-1–Ser-20 form the signal peptide. One can recognise a DOMON domain in the interval Glu-28–Gly-145. Residue Asn-49 is glycosylated (N-linked (GlcNAc...) asparagine).

It is found in the secreted. This is DOMON domain-containing protein CBG21755 from Caenorhabditis briggsae.